We begin with the raw amino-acid sequence, 129 residues long: MSSAPLLQRTPGKKIALPTRVEPKVFFANERTFLSWLNFTVMLGGLGVGLLNFGDKIGRVSAGLFTFVAMGTMIYALVTYHWRAAAIRRRGSGPYDDRLGPTLLCFFLLVAVIINFILRLKYNDANTKL.

Ser2 is modified (N-acetylserine). Residues 2–32 (SSAPLLQRTPGKKIALPTRVEPKVFFANERT) lie on the Cytoplasmic side of the membrane. The chain crosses the membrane as a helical span at residues 33–53 (FLSWLNFTVMLGGLGVGLLNF). At 54 to 59 (GDKIGR) the chain is on the vacuolar side. A helical transmembrane segment spans residues 60-80 (VSAGLFTFVAMGTMIYALVTY). Residues 81–98 (HWRAAAIRRRGSGPYDDR) are Cytoplasmic-facing. A helical membrane pass occupies residues 99 to 119 (LGPTLLCFFLLVAVIINFILR). The Vacuolar segment spans residues 120 to 129 (LKYNDANTKL).

This sequence belongs to the VTC1 family. In terms of assembly, the VTC core complex is an integral membrane heterooligomer composed of the catalytic subunit VTC4 and the accessory subunits VTC1, VTC2 and VTC3. The complex exists in 2 different sub-complexes: VTC1-VTC2-VCT4 and VCT1-VTC3-VTC4. The VCT1-VTC3-VTC4 subcomplex is mostly found on the vacuolar membrane. The VTC1-VTC2-VCT4 subcomplex is observed in the cell periphery, probably ER and nuclear envelope, but localizes to the vacuole under phosphate starvation. Each subunit contains 3 transmembrane helices. VTC1 is a small membrane protein without hydrophilic domain. VTC2, VTC3 and VTC4 are related and have 2 hydrophilic domains that face the cytosol, an N-terminal SPX domain and the central core domain. The central core in VTC4 is the catalytic domain, with the essential catalytic lysine replaced by isoleucine and leucine in VTC2 and VTC3, respectively. The core complex associates with the accessory subunit VTC5. The complex interacts with the v-SNARE NYV1 and with the V(0) subunit of V-ATPase VPH1.

It is found in the vacuole membrane. The protein resides in the cytoplasm. Its subcellular location is the cell cortex. The protein localises to the endoplasmic reticulum membrane. It localises to the cytoplasmic vesicle. It is found in the autophagosome membrane. Its function is as follows. Accessory subunit of the vacuolar transporter chaperone (VTC) complex. The VTC complex acts as a vacuolar polyphosphate polymerase that catalyzes the synthesis of inorganic polyphosphate (polyP) via transfer of phosphate from ATP to a growing polyP chain, releasing ADP. VTC exposes its catalytic domain VTC4 to the cytosol, where the growing polyP chain winds through a tunnel-shaped pocket, integrating cytoplasmic polymer synthesis with polyP membrane translocation. The VTC complex carries 9 vacuolar transmembrane domains, which are likely to constitute the translocation channel into the organelle lumen. PolyP synthesis is tightly coupled to its transport into the vacuole lumen, in order to avoid otherwise toxic intermediates in the cytosol, and it depends on the proton gradient across the membrane, formed by V-ATPase. VTC1 contributes only 3 transmembrane domains to the complex. The VTC complex also plays a role in vacuolar membrane fusion. Required for SEC18/NSF activity in SNARE priming, membrane binding of LMA1 and V(0) trans-complex formation. The protein is Vacuolar transporter chaperone complex subunit 1 of Saccharomyces cerevisiae (strain ATCC 204508 / S288c) (Baker's yeast).